We begin with the raw amino-acid sequence, 410 residues long: LL-diaminopimelate aminotransferase (410 aa).

Tyr15 and Gly42 together coordinate substrate. Pyridoxal 5'-phosphate-binding positions include Tyr72, 108-109, Tyr132, Asn187, Tyr218, and 246-248; these read AK and SFS. Residues Lys109, Tyr132, and Asn187 each coordinate substrate. N6-(pyridoxal phosphate)lysine is present on Lys249. 2 residues coordinate pyridoxal 5'-phosphate: Arg257 and Asn292. Positions 292 and 388 each coordinate substrate.

The protein belongs to the class-I pyridoxal-phosphate-dependent aminotransferase family. LL-diaminopimelate aminotransferase subfamily. As to quaternary structure, homodimer. Pyridoxal 5'-phosphate serves as cofactor.

It catalyses the reaction (2S,6S)-2,6-diaminopimelate + 2-oxoglutarate = (S)-2,3,4,5-tetrahydrodipicolinate + L-glutamate + H2O + H(+). It participates in amino-acid biosynthesis; L-lysine biosynthesis via DAP pathway; LL-2,6-diaminopimelate from (S)-tetrahydrodipicolinate (aminotransferase route): step 1/1. Its function is as follows. Involved in the synthesis of meso-diaminopimelate (m-DAP or DL-DAP), required for both lysine and peptidoglycan biosynthesis. Catalyzes the direct conversion of tetrahydrodipicolinate to LL-diaminopimelate. Can also use m-DAP instead of LL-DAP as the amino-group donor. This Acetivibrio thermocellus (strain ATCC 27405 / DSM 1237 / JCM 9322 / NBRC 103400 / NCIMB 10682 / NRRL B-4536 / VPI 7372) (Clostridium thermocellum) protein is LL-diaminopimelate aminotransferase.